A 252-amino-acid chain; its full sequence is tRNA (guanine-N(1)-)-methyltransferase (252 aa).

S-adenosyl-L-methionine is bound by residues G113 and 133–138; that span reads IGDYVL. Over residues 229-238 the composition is skewed to low complexity; the sequence is VARPAANAPA. Positions 229–252 are disordered; the sequence is VARPAANAPAKGESQKTPKNKTDG. The segment covering 241–252 has biased composition (basic and acidic residues); it reads ESQKTPKNKTDG.

This sequence belongs to the RNA methyltransferase TrmD family. As to quaternary structure, homodimer.

The protein resides in the cytoplasm. The catalysed reaction is guanosine(37) in tRNA + S-adenosyl-L-methionine = N(1)-methylguanosine(37) in tRNA + S-adenosyl-L-homocysteine + H(+). Specifically methylates guanosine-37 in various tRNAs. This is tRNA (guanine-N(1)-)-methyltransferase from Rhodopseudomonas palustris (strain HaA2).